Here is a 20-residue protein sequence, read N- to C-terminus: Cytochrome c oxidase subunit 6A2, mitochondrial (20 aa).

The segment at 1-20 (ASGAKGDHGGAGASTXXLLT) is disordered.

Belongs to the cytochrome c oxidase subunit 6A family. Component of the cytochrome c oxidase (complex IV, CIV), a multisubunit enzyme composed of 14 subunits. The complex is composed of a catalytic core of 3 subunits MT-CO1, MT-CO2 and MT-CO3, encoded in the mitochondrial DNA, and 11 supernumerary subunits COX4I, COX5A, COX5B, COX6A, COX6B, COX6C, COX7A, COX7B, COX7C, COX8 and NDUFA4, which are encoded in the nuclear genome. The complex exists as a monomer or a dimer and forms supercomplexes (SCs) in the inner mitochondrial membrane with NADH-ubiquinone oxidoreductase (complex I, CI) and ubiquinol-cytochrome c oxidoreductase (cytochrome b-c1 complex, complex III, CIII), resulting in different assemblies (supercomplex SCI(1)III(2)IV(1) and megacomplex MCI(2)III(2)IV(2)). Heart specific isoform.

It is found in the mitochondrion inner membrane. It participates in energy metabolism; oxidative phosphorylation. Its function is as follows. Component of the cytochrome c oxidase, the last enzyme in the mitochondrial electron transport chain which drives oxidative phosphorylation. The respiratory chain contains 3 multisubunit complexes succinate dehydrogenase (complex II, CII), ubiquinol-cytochrome c oxidoreductase (cytochrome b-c1 complex, complex III, CIII) and cytochrome c oxidase (complex IV, CIV), that cooperate to transfer electrons derived from NADH and succinate to molecular oxygen, creating an electrochemical gradient over the inner membrane that drives transmembrane transport and the ATP synthase. Cytochrome c oxidase is the component of the respiratory chain that catalyzes the reduction of oxygen to water. Electrons originating from reduced cytochrome c in the intermembrane space (IMS) are transferred via the dinuclear copper A center (CU(A)) of subunit 2 and heme A of subunit 1 to the active site in subunit 1, a binuclear center (BNC) formed by heme A3 and copper B (CU(B)). The BNC reduces molecular oxygen to 2 water molecules unsing 4 electrons from cytochrome c in the IMS and 4 protons from the mitochondrial matrix. Plays a role in the assembly and stabilization of complex IV. In Canis lupus familiaris (Dog), this protein is Cytochrome c oxidase subunit 6A2, mitochondrial (COX6A2).